An 890-amino-acid polypeptide reads, in one-letter code: Leucine--tRNA ligase (890 aa).

Residues 48-58 (PYPSGKLHMGH) carry the 'HIGH' region motif. Positions 645–649 (KMSKS) match the 'KMSKS' region motif. Lys-648 is an ATP binding site.

It belongs to the class-I aminoacyl-tRNA synthetase family.

It is found in the cytoplasm. It carries out the reaction tRNA(Leu) + L-leucine + ATP = L-leucyl-tRNA(Leu) + AMP + diphosphate. This is Leucine--tRNA ligase from Polynucleobacter asymbioticus (strain DSM 18221 / CIP 109841 / QLW-P1DMWA-1) (Polynucleobacter necessarius subsp. asymbioticus).